Consider the following 138-residue polypeptide: Basic phospholipase A2 Tbo-G6D49 (138 aa).

Positions 1-16 (MRTLWIMAVLLVGVEG) are cleaved as a signal peptide. 7 disulfides stabilise this stretch: Cys-42/Cys-131, Cys-44/Cys-60, Cys-59/Cys-111, Cys-65/Cys-138, Cys-66/Cys-104, Cys-73/Cys-97, and Cys-91/Cys-102. 3 residues coordinate Ca(2+): Tyr-43, Gly-45, and Gly-47. His-63 is a catalytic residue. Residue Asp-64 coordinates Ca(2+). The active site involves Asp-105.

As to quaternary structure, monomer. Ca(2+) is required as a cofactor. In terms of tissue distribution, expressed by the venom gland.

It is found in the secreted. It carries out the reaction a 1,2-diacyl-sn-glycero-3-phosphocholine + H2O = a 1-acyl-sn-glycero-3-phosphocholine + a fatty acid + H(+). Its function is as follows. Snake venom phospholipase A2 (PLA2) that impairs hemostasis. It weakly inhibits ADP-induced platelet aggregation when tested on platelet rich plasma from human and rabbit blood (15-25% of inhibition at 5-10 ug of enzyme), and dose-dependently inhibits blood coagulation, possibly by inhibiting thrombin activation. Exhibits strong hydrolytic activities toward L-dipalmitoyl phosphatidylcholine. PLA2 catalyzes the calcium-dependent hydrolysis of the 2-acyl groups in 3-sn-phosphoglycerides. This chain is Basic phospholipase A2 Tbo-G6D49, found in Craspedocephalus borneensis (Borneo pit viper).